A 393-amino-acid polypeptide reads, in one-letter code: CCA-adding enzyme (393 aa).

Positions 27 and 30 each coordinate ATP. CTP is bound by residues glycine 27 and arginine 30. Mg(2+) contacts are provided by aspartate 40 and aspartate 42. 5 residues coordinate ATP: arginine 111, aspartate 154, arginine 157, arginine 160, and arginine 163. CTP contacts are provided by arginine 111, aspartate 154, arginine 157, arginine 160, and arginine 163.

It belongs to the tRNA nucleotidyltransferase/poly(A) polymerase family. Bacterial CCA-adding enzyme type 3 subfamily. In terms of assembly, homodimer. It depends on Mg(2+) as a cofactor.

It catalyses the reaction a tRNA precursor + 2 CTP + ATP = a tRNA with a 3' CCA end + 3 diphosphate. The catalysed reaction is a tRNA with a 3' CCA end + 2 CTP + ATP = a tRNA with a 3' CCACCA end + 3 diphosphate. Functionally, catalyzes the addition and repair of the essential 3'-terminal CCA sequence in tRNAs without using a nucleic acid template. Adds these three nucleotides in the order of C, C, and A to the tRNA nucleotide-73, using CTP and ATP as substrates and producing inorganic pyrophosphate. tRNA 3'-terminal CCA addition is required both for tRNA processing and repair. Also involved in tRNA surveillance by mediating tandem CCA addition to generate a CCACCA at the 3' terminus of unstable tRNAs. While stable tRNAs receive only 3'-terminal CCA, unstable tRNAs are marked with CCACCA and rapidly degraded. The protein is CCA-adding enzyme of Listeria monocytogenes serovar 1/2a (strain ATCC BAA-679 / EGD-e).